A 305-amino-acid polypeptide reads, in one-letter code: Delta-9 acyl-lipid desaturase 1 (305 aa).

Residues 1 to 20 (MSLSASEKEENNKKMAADKA) are disordered. 2 consecutive transmembrane segments (helical) span residues 39 to 59 (IVKA…PFNF) and 60 to 80 (TWPA…GITV). Positions 83, 88, 120, 123, and 124 each coordinate Fe cation. The short motif at 83 to 88 (HRNLAH) is the Histidine box-1 element. The Histidine box-2 motif lies at 120–124 (HRYHH). A helical membrane pass occupies residues 180 to 200 (VLYHILTFGFLLYYFGGLSFL). Fe cation contacts are provided by H223, H252, H255, and H256. The Histidine box-3 motif lies at 252 to 256 (HNNHH). Residues 268–288 (WWQIDISWYIVRFLEIIGLAT) traverse the membrane as a helical segment.

It belongs to the fatty acid desaturase type 1 family. Fe cation is required as a cofactor. In terms of tissue distribution, strongly expressed in inflorescence meristems, leaves, and flowers, and weakly in roots and seedpods.

It is found in the endoplasmic reticulum membrane. It localises to the plastid. Its subcellular location is the chloroplast membrane. It functions in the pathway lipid metabolism; polyunsaturated fatty acid biosynthesis. In terms of biological role, involved in delta-9 desaturation of fatty acids. Involved in the production of very-long-chain fatty acids (VLCFAs). May desaturate chloroplastic monogalactosyl diacylglycerol (MGDG) and alter chloroplast membrane fluidity, which is required to prime a cold acclimation response. The polypeptide is Delta-9 acyl-lipid desaturase 1 (Arabidopsis thaliana (Mouse-ear cress)).